Consider the following 657-residue polypeptide: Glycogen debranching enzyme (657 aa).

The active-site Nucleophile is the Asp-336. Glu-371 functions as the Proton donor in the catalytic mechanism. The tract at residues 460–479 (ANGEENRDGTNNNYSNNHGK) is disordered.

This sequence belongs to the glycosyl hydrolase 13 family.

The catalysed reaction is Hydrolysis of (1-&gt;6)-alpha-D-glucosidic linkages to branches with degrees of polymerization of three or four glucose residues in limit dextrin.. Its pathway is glycan degradation; glycogen degradation. In terms of biological role, removes maltotriose and maltotetraose chains that are attached by 1,6-alpha-linkage to the limit dextrin main chain, generating a debranched limit dextrin. The protein is Glycogen debranching enzyme of Escherichia coli O17:K52:H18 (strain UMN026 / ExPEC).